We begin with the raw amino-acid sequence, 231 residues long: MSRAALDKDPRDVASMFDGVARRYDLTNTVLSLGQDRYWRRATRSALRIGPGDKVLDLAAGTAVSTVELAKSGAWCVAADFSVGMLAAGHERKVCKVAGDATRLPFADDVFDAVTISFGLRNVVDFSAALREMARVTRPGGRLVVCEFSTPVSALFATVYKEYLMRALPRVARAVSSNPEAYVYLAESIRAWPDQAALAQQMSRAGWSAVRWRNLTGGIVALHAGYKPQPV.

S-adenosyl-L-methionine contacts are provided by residues threonine 62, aspartate 80, 100–101 (DA), and serine 117.

It belongs to the class I-like SAM-binding methyltransferase superfamily. MenG/UbiE family.

The enzyme catalyses a 2-demethylmenaquinol + S-adenosyl-L-methionine = a menaquinol + S-adenosyl-L-homocysteine + H(+). The protein operates within quinol/quinone metabolism; menaquinone biosynthesis; menaquinol from 1,4-dihydroxy-2-naphthoate: step 2/2. Its function is as follows. Methyltransferase required for the conversion of demethylmenaquinol (DMKH2) to menaquinol (MKH2). The protein is Demethylmenaquinone methyltransferase of Mycobacterium marinum (strain ATCC BAA-535 / M).